A 379-amino-acid polypeptide reads, in one-letter code: (R)-2-hydroxyglutaryl-CoA dehydratase, subunit beta (379 aa).

It belongs to the FldB/FldC dehydratase alpha/beta subunit family. As to quaternary structure, the (R)-2-hydroxyglutaryl-CoA dehydratase enzyme system is a heterodimer composed of an alpha subunit (HgdA) and a beta subunit (HgdB). [4Fe-4S] cluster serves as cofactor. FMN is required as a cofactor. It depends on Mg(2+) as a cofactor.

Its subcellular location is the cytoplasm. It carries out the reaction (R)-2-hydroxyglutaryl-CoA = (2E)-glutaconyl-CoA + H2O. The protein operates within amino-acid degradation; L-glutamate degradation via hydroxyglutarate pathway; crotonoyl-CoA from L-glutamate: step 4/5. With respect to regulation, activated by the HgdC. Reversibly inactivated by oxidants such as 2-nitrophenol, 3-nitrophenol, 4-nitrophenol, 4-nitrobenzoate, carbonyl cyanide 4-(trifluoromethoxy)phenylhydrazone (FCCP) and chloramphenicol. Irreversibly inactivated by oxidants such as hydroxylamine and nitrite. Functionally, involved in the fermentation of L-glutamate via the hydroxyglutarate pathway. Catalyzes the reversible syn-elimination of water from (R)-2-hydroxyglutaryl-CoA to yield (E)-glutaconyl-CoA. The dehydration mechanism involves a transient one electron reduction of the thioester from (R)-2-hydroxyglutaryl-CoA, generating a ketyl radical. Prior to (E)-glutaconyl-CoA formation, the ketyl radical is subsequently reoxidized by electron transfer back to the HgdA-HgdB complex (CompD) to avoid change in oxidation state of the substrate. The appropriate redox state of dehydratase HgdA-HgdB complex (CompD) is maintained by HgdC (CompA) via hydrolysis of ATP and ATP-dependent electron transfer. Since the electron is recycled, the dehydratase is able to perform several turnovers with only catalytic amounts of ATP and substoichiometric amounts of HgdC (CompA). This Acidaminococcus fermentans (strain ATCC 25085 / DSM 20731 / CCUG 9996 / CIP 106432 / VR4) protein is (R)-2-hydroxyglutaryl-CoA dehydratase, subunit beta.